The primary structure comprises 118 residues: Large ribosomal subunit protein eL18 (118 aa).

Belongs to the eukaryotic ribosomal protein eL18 family.

This is Large ribosomal subunit protein eL18 from Nanoarchaeum equitans (strain Kin4-M).